The sequence spans 240 residues: Poxin (240 aa).

H46 functions as the Proton donor in the catalytic mechanism. Y181 (shared with catalytic histidine of dimeric partner) is an active-site residue. K185 functions as the Proton acceptor; shared with catalytic histidine of dimeric partner in the catalytic mechanism.

The protein belongs to the poxin family. In terms of assembly, homodimer.

It carries out the reaction 2',3'-cGAMP + H2O = Gp(2'-5')Ap(3') + H(+). Its function is as follows. Nuclease that cleaves host 2',3'-cGAMP. This is Poxin (P26) from Lepidoptera (butterflies and moths).